Reading from the N-terminus, the 34-residue chain is Photosystem II reaction center protein M (34 aa).

The chain crosses the membrane as a helical span at residues 7–27 (GFLATLLFVAVPMLFLIGLYI).

This sequence belongs to the PsbM family. In terms of assembly, PSII is composed of 1 copy each of membrane proteins PsbA, PsbB, PsbC, PsbD, PsbE, PsbF, PsbH, PsbI, PsbJ, PsbK, PsbL, PsbM, PsbT, PsbX, PsbY, Psb30/Ycf12, peripheral proteins PsbO, CyanoQ (PsbQ), PsbU, PsbV and a large number of cofactors. It forms dimeric complexes.

The protein localises to the cellular thylakoid membrane. One of the components of the core complex of photosystem II (PSII). PSII is a light-driven water:plastoquinone oxidoreductase that uses light energy to abstract electrons from H(2)O, generating O(2) and a proton gradient subsequently used for ATP formation. It consists of a core antenna complex that captures photons, and an electron transfer chain that converts photonic excitation into a charge separation. This subunit is found at the monomer-monomer interface. This chain is Photosystem II reaction center protein M, found in Prochlorococcus marinus (strain MIT 9303).